A 389-amino-acid chain; its full sequence is S-adenosylmethionine synthase (389 aa).

Histidine 17 contacts ATP. A Mg(2+)-binding site is contributed by aspartate 19. Residue glutamate 45 coordinates K(+). Residues glutamate 58 and glutamine 101 each contribute to the L-methionine site. Positions 101 to 111 are flexible loop; the sequence is QSPDIAQGVTE. ATP is bound by residues 168 to 170, 234 to 235, aspartate 243, 249 to 250, alanine 266, and lysine 270; these read DSK, RF, and RK. Aspartate 243 is an L-methionine binding site. Lysine 274 contributes to the L-methionine binding site.

This sequence belongs to the AdoMet synthase family. In terms of assembly, homotetramer; dimer of dimers. It depends on Mg(2+) as a cofactor. The cofactor is K(+).

It is found in the cytoplasm. It catalyses the reaction L-methionine + ATP + H2O = S-adenosyl-L-methionine + phosphate + diphosphate. It participates in amino-acid biosynthesis; S-adenosyl-L-methionine biosynthesis; S-adenosyl-L-methionine from L-methionine: step 1/1. Its function is as follows. Catalyzes the formation of S-adenosylmethionine (AdoMet) from methionine and ATP. The overall synthetic reaction is composed of two sequential steps, AdoMet formation and the subsequent tripolyphosphate hydrolysis which occurs prior to release of AdoMet from the enzyme. The chain is S-adenosylmethionine synthase from Geotalea uraniireducens (strain Rf4) (Geobacter uraniireducens).